The primary structure comprises 279 residues: Putative pyruvate, phosphate dikinase regulatory protein (279 aa).

Residue 154 to 161 (GVSRTSKT) participates in ADP binding.

This sequence belongs to the pyruvate, phosphate/water dikinase regulatory protein family. PDRP subfamily.

It carries out the reaction N(tele)-phospho-L-histidyl/L-threonyl-[pyruvate, phosphate dikinase] + ADP = N(tele)-phospho-L-histidyl/O-phospho-L-threonyl-[pyruvate, phosphate dikinase] + AMP + H(+). The catalysed reaction is N(tele)-phospho-L-histidyl/O-phospho-L-threonyl-[pyruvate, phosphate dikinase] + phosphate + H(+) = N(tele)-phospho-L-histidyl/L-threonyl-[pyruvate, phosphate dikinase] + diphosphate. In terms of biological role, bifunctional serine/threonine kinase and phosphorylase involved in the regulation of the pyruvate, phosphate dikinase (PPDK) by catalyzing its phosphorylation/dephosphorylation. This is Putative pyruvate, phosphate dikinase regulatory protein from Rhodopseudomonas palustris (strain BisB18).